The following is a 194-amino-acid chain: Crossover junction endodeoxyribonuclease RuvC (194 aa).

Residues Asp7, Glu68, and Asp141 contribute to the active site. Positions 7, 68, and 141 each coordinate Mg(2+). The tract at residues 162–194 (GGEREQHLTAAQRQWAEAAQNSTRRRKNSDRGM) is disordered. The span at 184–194 (TRRRKNSDRGM) shows a compositional bias: basic residues.

The protein belongs to the RuvC family. Homodimer which binds Holliday junction (HJ) DNA. The HJ becomes 2-fold symmetrical on binding to RuvC with unstacked arms; it has a different conformation from HJ DNA in complex with RuvA. In the full resolvosome a probable DNA-RuvA(4)-RuvB(12)-RuvC(2) complex forms which resolves the HJ. Mg(2+) serves as cofactor.

It localises to the cytoplasm. The enzyme catalyses Endonucleolytic cleavage at a junction such as a reciprocal single-stranded crossover between two homologous DNA duplexes (Holliday junction).. The RuvA-RuvB-RuvC complex processes Holliday junction (HJ) DNA during genetic recombination and DNA repair. Endonuclease that resolves HJ intermediates. Cleaves cruciform DNA by making single-stranded nicks across the HJ at symmetrical positions within the homologous arms, yielding a 5'-phosphate and a 3'-hydroxyl group; requires a central core of homology in the junction. The consensus cleavage sequence is 5'-(A/T)TT(C/G)-3'. Cleavage occurs on the 3'-side of the TT dinucleotide at the point of strand exchange. HJ branch migration catalyzed by RuvA-RuvB allows RuvC to scan DNA until it finds its consensus sequence, where it cleaves and resolves the cruciform DNA. The sequence is that of Crossover junction endodeoxyribonuclease RuvC from Bifidobacterium longum subsp. infantis (strain ATCC 15697 / DSM 20088 / JCM 1222 / NCTC 11817 / S12).